A 42-amino-acid polypeptide reads, in one-letter code: Mating-type M-specific polypeptide Mi (42 aa).

The protein resides in the cytoplasm. It localises to the nucleus. Functionally, mating type proteins are sequence specific DNA-binding proteins that act as master switches in yeast differentiation by controlling gene expression in a cell type-specific fashion. Required for meiosis, but plays no role in conjugation. This Schizosaccharomyces pombe (strain 972 / ATCC 24843) (Fission yeast) protein is Mating-type M-specific polypeptide Mi (mat1-Mi).